A 516-amino-acid polypeptide reads, in one-letter code: Bifunctional purine biosynthesis protein PurH (516 aa).

The 149-residue stretch at 1-149 (MSERQPIRRA…KNHANVAVLT (149 aa)) folds into the MGS-like domain.

The protein belongs to the PurH family.

It carries out the reaction (6R)-10-formyltetrahydrofolate + 5-amino-1-(5-phospho-beta-D-ribosyl)imidazole-4-carboxamide = 5-formamido-1-(5-phospho-D-ribosyl)imidazole-4-carboxamide + (6S)-5,6,7,8-tetrahydrofolate. It catalyses the reaction IMP + H2O = 5-formamido-1-(5-phospho-D-ribosyl)imidazole-4-carboxamide. It participates in purine metabolism; IMP biosynthesis via de novo pathway; 5-formamido-1-(5-phospho-D-ribosyl)imidazole-4-carboxamide from 5-amino-1-(5-phospho-D-ribosyl)imidazole-4-carboxamide (10-formyl THF route): step 1/1. Its pathway is purine metabolism; IMP biosynthesis via de novo pathway; IMP from 5-formamido-1-(5-phospho-D-ribosyl)imidazole-4-carboxamide: step 1/1. The protein is Bifunctional purine biosynthesis protein PurH of Cutibacterium acnes (strain DSM 16379 / KPA171202) (Propionibacterium acnes).